The primary structure comprises 504 residues: Sodium-coupled neutral amino acid transporter 3 (504 aa).

N-linked (GlcNAc...) asparagine glycosylation is present at Asn74. 5 helical membrane-spanning segments follow: residues 83-103 (GILG…LFLL), 106-126 (VALL…VVGI), 144-164 (AAAL…LYII), 187-207 (MNGN…LALM), and 213-233 (LGYS…AVIY). The cysteines at positions 240 and 275 are disulfide-linked. 4 N-linked (GlcNAc...) asparagine glycosylation sites follow: Asn247, Asn248, Asn252, and Asn323. The next 5 helical transmembrane spans lie at 324–344 (LSIA…YLTF), 366–386 (ILCV…IVLF), 408–428 (VLIA…APNI), 431–451 (IFGV…PAIF), and 471–491 (ALCF…FIII).

Belongs to the amino acid/polyamine transporter 2 family.

Its subcellular location is the cell membrane. It localises to the basolateral cell membrane. The catalysed reaction is L-glutamine(out) + Na(+)(out) + H(+)(in) = L-glutamine(in) + Na(+)(in) + H(+)(out). It catalyses the reaction L-asparagine(out) + Na(+)(out) + H(+)(in) = L-asparagine(in) + Na(+)(in) + H(+)(out). The enzyme catalyses L-histidine(out) + Na(+)(out) + H(+)(in) = L-histidine(in) + Na(+)(in) + H(+)(out). In terms of biological role, symporter that cotransports specific neutral amino acids and sodium ions, coupled to an H(+) antiporter activity. Mainly participates in the glutamate-GABA-glutamine cycle in brain where it transports L-glutamine from astrocytes in the intercellular space for the replenishment of both neurotransmitters glutamate and gamma-aminobutyric acid (GABA) in neurons and also functions as the major influx transporter in ganglion cells mediating the uptake of glutamine. The transport activity is specific for L-glutamine, L-histidine and L-asparagine. The transport is electroneutral coupled to the cotransport of 1 Na(+) and the antiport of 1 H(+). The transport is pH dependent, saturable, Li(+) tolerant and functions in both direction depending on the concentration gradients of its substrates and cotransported ions. Also mediates an amino acid-gated H(+) conductance that is not stoichiometrically coupled to the amino acid transport but which influences the ionic gradients that drive the amino acid transport. In addition, may play a role in nitrogen metabolism, amino acid homeostasis, glucose metabolism and renal ammoniagenesis. This is Sodium-coupled neutral amino acid transporter 3 from Homo sapiens (Human).